The sequence spans 1064 residues: Phosphatidylinositol 4,5-bisphosphate 3-kinase catalytic subunit beta isoform (1064 aa).

In terms of domain architecture, PI3K-ABD spans 20-109; the sequence is SDGAISVDFL…LPVLKLVTRS (90 aa). Residues 188 to 279 form the PI3K-RBD domain; the sequence is GGKLVVAVHF…RTLPHFILVE (92 aa). Position 318 is a phosphoserine (serine 318). One can recognise a C2 PI3K-type domain in the interval 323–490; that stretch reads NNNPFQITLV…NATALHITFP (168 aa). Residues 404–412 carry the Nuclear localization signal (NLS) motif; that stretch reads KVKTKKSTK. The 178-residue stretch at 518 to 695 folds into the PIK helical domain; sequence ANVSSRGGKK…GVILEAYCRG (178 aa). Positions 766–1047 constitute a PI3K/PI4K catalytic domain; that stretch reads YVEKCKYMDS…KFDEALRESW (282 aa). A G-loop region spans residues 772-778; sequence YMDSKMK. The catalytic loop stretch occupies residues 910–918; that stretch reads GIGDRHSDN. The interval 929-955 is activation loop; that stretch reads HIDFGHILGNFKSKFGIKRERVPFILT. Position 1064 is a phosphoserine; by autocatalysis (serine 1064).

This sequence belongs to the PI3/PI4-kinase family. Heterodimer of a catalytic subunit PIK3CB and a p85 regulatory subunit (PIK3R1, PIK3R2 or PIK3R3). Interaction with PIK3R2 is required for nuclear localization and nuclear export. Part of a complex with PIK3R1 and PTEN. Binding to PTEN may antagonize the lipid kinase activity under normal growth conditions. Part of a complex involved in autophagosome formation composed of PIK3C3 and PIK3R4. Interacts with BECN1, ATG14 and RAB5A. Phosphorylation at Ser-1064 down-regulates lipid kinase activity. Post-translationally, autophosphorylation at Ser-1064 negatively regulates the phosphatidylinositol-4,5-bisphosphate 3-kinase activity.

It is found in the cytoplasm. It localises to the nucleus. It catalyses the reaction a 1,2-diacyl-sn-glycero-3-phospho-(1D-myo-inositol-4,5-bisphosphate) + ATP = a 1,2-diacyl-sn-glycero-3-phospho-(1D-myo-inositol-3,4,5-trisphosphate) + ADP + H(+). The enzyme catalyses 1-octadecanoyl-2-(5Z,8Z,11Z,14Z)-eicosatetraenoyl-sn-glycero-3-phospho-1D-myo-inositol 4,5-bisphosphate + ATP = 1-octadecanoyl-2-(5Z,8Z,11Z,14Z-eicosatetraenoyl)-sn-glycero-3-phospho-(1D-myo-inositol 3,4,5-triphosphate) + ADP + H(+). It carries out the reaction L-seryl-[protein] + ATP = O-phospho-L-seryl-[protein] + ADP + H(+). It functions in the pathway phospholipid metabolism; phosphatidylinositol phosphate biosynthesis. Its function is as follows. Phosphoinositide-3-kinase (PI3K) phosphorylates phosphatidylinositol (PI) derivatives at position 3 of the inositol ring to produce 3-phosphoinositides. Uses ATP and PtdIns(4,5)P2 (phosphatidylinositol 4,5-bisphosphate) to generate phosphatidylinositol 3,4,5-trisphosphate (PIP3). PIP3 plays a key role by recruiting PH domain-containing proteins to the membrane, including AKT1 and PDPK1, activating signaling cascades involved in cell growth, survival, proliferation, motility and morphology. Involved in the activation of AKT1 upon stimulation by G-protein coupled receptors (GPCRs) ligands such as CXCL12, sphingosine 1-phosphate, and lysophosphatidic acid. May also act downstream receptor tyrosine kinases. Required in different signaling pathways for stable platelet adhesion and aggregation. Plays a role in platelet activation signaling triggered by GPCRs, alpha-IIb/beta-3 integrins (ITGA2B/ ITGB3) and ITAM (immunoreceptor tyrosine-based activation motif)-bearing receptors such as GP6. Regulates the strength of adhesion of ITGA2B/ ITGB3 activated receptors necessary for the cellular transmission of contractile forces. Required for platelet aggregation induced by F2 (thrombin) and thromboxane A2 (TXA2). Has a role in cell survival. May have a role in cell migration. Involved in the early stage of autophagosome formation. Modulates the intracellular level of PtdIns3P (phosphatidylinositol 3-phosphate) and activates PIK3C3 kinase activity. May act as a scaffold, independently of its lipid kinase activity to positively regulate autophagy. May have a role in insulin signaling as scaffolding protein in which the lipid kinase activity is not required. May have a kinase-independent function in regulating cell proliferation and in clathrin-mediated endocytosis. Mediator of oncogenic signal in cell lines lacking PTEN. The lipid kinase activity is necessary for its role in oncogenic transformation. Required for the growth of ERBB2 and RAS driven tumors. Also has a protein kinase activity showing autophosphorylation. The protein is Phosphatidylinositol 4,5-bisphosphate 3-kinase catalytic subunit beta isoform (Pik3cb) of Mus musculus (Mouse).